Reading from the N-terminus, the 423-residue chain is Putative competence-damage inducible protein (423 aa).

This sequence belongs to the CinA family.

This is Putative competence-damage inducible protein from Streptococcus pyogenes serotype M1.